The sequence spans 191 residues: Small ribosomal subunit protein uS7 (191 aa).

The tract at residues 56–80 (NKSGEQGDGDGESGGKAGGIKKRSL) is disordered.

This sequence belongs to the universal ribosomal protein uS7 family. Part of the 30S ribosomal subunit. Contacts proteins S9 and S11.

Functionally, one of the primary rRNA binding proteins, it binds directly to 16S rRNA where it nucleates assembly of the head domain of the 30S subunit. Is located at the subunit interface close to the decoding center, probably blocks exit of the E-site tRNA. In Coxiella burnetii (strain CbuK_Q154) (Coxiella burnetii (strain Q154)), this protein is Small ribosomal subunit protein uS7.